The sequence spans 81 residues: Conotoxin Lt6.4 (81 aa).

A signal peptide spans 1 to 19 (MKLVLAIVLILMFLSLSAG). The propeptide occupies 20–42 (AETSDNGVSRGGHRPQYWPVTPP). 3 disulfides stabilise this stretch: Cys46/Cys60, Cys53/Cys65, and Cys59/Cys80.

The protein belongs to the conotoxin I3 superfamily. As to expression, expressed by the venom duct.

The protein localises to the secreted. This is Conotoxin Lt6.4 from Conus litteratus (Lettered cone).